The sequence spans 473 residues: Arginine biosynthesis bifunctional protein ArgJ, mitochondrial (473 aa).

Substrate contacts are provided by Thr201, Lys230, Thr241, Glu328, Asn468, and Thr473. The active-site Nucleophile is the Thr241.

It belongs to the ArgJ family. In terms of assembly, heterodimer of an alpha and a beta chain. The alpha and beta chains are autoproteolytically processed from a single precursor protein within the mitochondrion.

Its subcellular location is the mitochondrion matrix. The catalysed reaction is N(2)-acetyl-L-ornithine + L-glutamate = N-acetyl-L-glutamate + L-ornithine. It carries out the reaction L-glutamate + acetyl-CoA = N-acetyl-L-glutamate + CoA + H(+). The protein operates within amino-acid biosynthesis; L-arginine biosynthesis; L-ornithine and N-acetyl-L-glutamate from L-glutamate and N(2)-acetyl-L-ornithine (cyclic): step 1/1. Its pathway is amino-acid biosynthesis; L-arginine biosynthesis; N(2)-acetyl-L-ornithine from L-glutamate: step 1/4. Catalyzes two activities which are involved in the cyclic version of arginine biosynthesis: the synthesis of acetylglutamate from glutamate and acetyl-CoA, and of ornithine by transacetylation between acetylornithine and glutamate. The sequence is that of Arginine biosynthesis bifunctional protein ArgJ, mitochondrial from Paracoccidioides lutzii (strain ATCC MYA-826 / Pb01) (Paracoccidioides brasiliensis).